A 179-amino-acid chain; its full sequence is Large ribosomal subunit protein uL6 (179 aa).

It belongs to the universal ribosomal protein uL6 family. As to quaternary structure, part of the 50S ribosomal subunit.

In terms of biological role, this protein binds to the 23S rRNA, and is important in its secondary structure. It is located near the subunit interface in the base of the L7/L12 stalk, and near the tRNA binding site of the peptidyltransferase center. The protein is Large ribosomal subunit protein uL6 of Syntrophus aciditrophicus (strain SB).